Here is a 1050-residue protein sequence, read N- to C-terminus: Antibiotic efflux pump membrane transporter ArpB (1050 aa).

The next 12 membrane-spanning stretches (helical) occupy residues 10–30, 339–359, 370–390, 393–413, 440–460, 472–492, 539–559, 871–891, 893–913, 923–943, 972–992, and 1004–1024; these read IFAW…ILKL, GVIH…YLFL, MTVP…GFSI, LTMF…IVVV, GALV…AFFG, ITIV…TPAL, VPFL…FARI, MPAL…ALYE, WSIP…ALIA, VYFL…AILI, IIMT…ASGA, and VIGG…LFFV.

This sequence belongs to the resistance-nodulation-cell division (RND) (TC 2.A.6) family.

It is found in the cell inner membrane. Its function is as follows. The inner membrane transporter component of an antibiotic efflux pump. Confers resistance to numerous structurally unrelated antibiotics such as carbenicillin, chloramphenicol, erythromycin, novobiocin, streptomycin and tetracycline. Is not involved in organic solvent efflux. This is Antibiotic efflux pump membrane transporter ArpB (arpB) from Pseudomonas putida (Arthrobacter siderocapsulatus).